Reading from the N-terminus, the 1307-residue chain is Light-sensor Protein kinase (1307 aa).

The region spanning 215-394 is the GAF domain; it reads DIELLCDTIV…VFGMQLNLHV (180 aa). Phytochromobilin is bound at residue cysteine 320. A PAS domain is found at 609–680; that stretch reads LANEMSRVLE…RLLSLALQGE (72 aa). Residues 683–739 form the PAC domain; sequence QNVEIKLKTFGTQTTERAVILIVNACCSRDASDFVVGVFFVGQDVTEQRMFMDRFTR. A hinge region spans residues 779 to 1003; sequence DHATGSVERL…WSFSEKFFQW (225 aa). The 304-residue stretch at 1004 to 1307 folds into the Protein kinase domain; that stretch reads IQITGSLGSG…DSYPSTEEPS (304 aa). Residues 1010-1018 and lysine 1031 each bind ATP; that span reads LGSGSSATV. Aspartate 1127 is a catalytic residue.

This sequence in the N-terminal section; belongs to the phytochrome family. The protein in the C-terminal section; belongs to the protein kinase superfamily. Ser/Thr protein kinase family. In terms of assembly, homodimer. Contains one covalently linked phytochromobilin chromophore.

Its subcellular location is the cell membrane. It catalyses the reaction L-seryl-[protein] + ATP = O-phospho-L-seryl-[protein] + ADP + H(+). It carries out the reaction L-threonyl-[protein] + ATP = O-phospho-L-threonyl-[protein] + ADP + H(+). Its function is as follows. Regulatory photoreceptor which exists in two forms that are reversibly interconvertible by light: the Pr form that absorbs maximally in the red region of the spectrum and the Pfr form that absorbs maximally in the far-red region. Photoconversion of Pr to Pfr induces an array of morphogenic responses, whereas reconversion of Pfr to Pr cancels the induction of those responses. Pfr controls the expression of a number of nuclear genes including those encoding the small subunit of ribulose-bisphosphate carboxylase, chlorophyll A/B binding protein, protochlorophyllide reductase, rRNA, etc. It also controls the expression of its own gene(s) in a negative feedback fashion. This is Light-sensor Protein kinase (PHY1) from Ceratodon purpureus (Fire moss).